The sequence spans 244 residues: Agamous-like MADS-box protein AGL13 (244 aa).

In terms of domain architecture, MADS-box spans 3–57 (RGKVEVKRIENKITRQVTFSKRKSGLLKKAYELSVLCDAEVSLIIFSTGGKLYEF). Positions 85-175 (TQGLRQEVTK…KLETEDHDFK (91 aa)) constitute a K-box domain.

The protein localises to the nucleus. Functionally, probable transcription factor. The polypeptide is Agamous-like MADS-box protein AGL13 (AGL13) (Arabidopsis thaliana (Mouse-ear cress)).